We begin with the raw amino-acid sequence, 346 residues long: Phosphoribosylformylglycinamidine cyclo-ligase (346 aa).

It belongs to the AIR synthase family.

The protein resides in the cytoplasm. It carries out the reaction 2-formamido-N(1)-(5-O-phospho-beta-D-ribosyl)acetamidine + ATP = 5-amino-1-(5-phospho-beta-D-ribosyl)imidazole + ADP + phosphate + H(+). The protein operates within purine metabolism; IMP biosynthesis via de novo pathway; 5-amino-1-(5-phospho-D-ribosyl)imidazole from N(2)-formyl-N(1)-(5-phospho-D-ribosyl)glycinamide: step 2/2. The protein is Phosphoribosylformylglycinamidine cyclo-ligase of Aliivibrio fischeri (strain ATCC 700601 / ES114) (Vibrio fischeri).